We begin with the raw amino-acid sequence, 751 residues long: Polyribonucleotide nucleotidyltransferase (751 aa).

2 residues coordinate Mg(2+): aspartate 528 and aspartate 534. One can recognise a KH domain in the interval 594–653; that stretch reads PRVISVTVPVSKIGEVIGPKGKMINQIQEDTGTDISIEDDGTVYIGATDGPSAEAARSAI. An S1 motif domain is found at 665–737; it reads GERYLGTVVK…DRGKLSLAPV (73 aa).

Belongs to the polyribonucleotide nucleotidyltransferase family. It depends on Mg(2+) as a cofactor.

It is found in the cytoplasm. The catalysed reaction is RNA(n+1) + phosphate = RNA(n) + a ribonucleoside 5'-diphosphate. Its function is as follows. Involved in mRNA degradation. Catalyzes the phosphorolysis of single-stranded polyribonucleotides processively in the 3'- to 5'-direction. The polypeptide is Polyribonucleotide nucleotidyltransferase (Kocuria rhizophila (strain ATCC 9341 / DSM 348 / NBRC 103217 / DC2201)).